A 591-amino-acid polypeptide reads, in one-letter code: Calnexin (591 aa).

An N-terminal signal peptide occupies residues 1 to 20; it reads MEGKWLLCLLLVLGTAAVEA. At 21 to 482 the chain is on the lumenal side; sequence HDGHDDDAID…QMLEAAEERP (462 aa). 2 residues coordinate Ca(2+): serine 75 and aspartate 118. Position 138 is an N6-acetyllysine (lysine 138). Cysteine 161 and cysteine 195 are disulfide-bonded. An alpha-D-glucoside contacts are provided by tyrosine 165, lysine 167, tyrosine 186, and aspartate 193. Positions 261–347 are disordered; sequence GNLLNDMTPP…EKPEDWDEDM (87 aa). Basic and acidic residues predominate over residues 275 to 320; sequence REIEDPEDRKPEDWDERPKIADPDAVKPDDWDEDAPSKIPDEEATK. A p domain (Extended arm) region spans residues 277 to 410; that stretch reads IEDPEDRKPE…RKIPNPDFFE (134 aa). 5 consecutive repeat copies span residues 279 to 291, 296 to 308, 315 to 327, 334 to 346, and 349 to 359. 4 X approximate repeats regions lie at residues 279–346 and 349–406; these read DPED…WDED and GEWE…IPNP. Residues 324-347 show a composition bias toward acidic residues; it reads WLDDEPEYIPDPDAEKPEDWDEDM. The interaction with PPIB stretch occupies residues 327–360; sequence DEPEYIPDPDAEKPEDWDEDMDGEWEAPQIANPK. Cysteine 361 and cysteine 367 form a disulfide bridge. Tandem repeats lie at residues 368–378, 382–392, and 396–406. Glutamate 426 contacts an alpha-D-glucoside. Ca(2+) is bound at residue aspartate 437. The chain crosses the membrane as a helical span at residues 483 to 503; it reads WLWVVYILTVALPVFLVILFC. 2 S-palmitoyl cysteine lipidation sites follow: cysteine 503 and cysteine 504. Residues 504–591 are Cytoplasmic-facing; it reads CSGKKQSNAM…SPRNRKPRRE (88 aa). Residues 504–591 are sufficient to mediate interaction with SGIP1; the sequence is CSGKKQSNAM…SPRNRKPRRE (88 aa). The segment covering 514 to 539 has biased composition (basic and acidic residues); the sequence is EYKKTDAPQPDVKDEEGKEEEKNKRD. Residues 514–591 are disordered; the sequence is EYKKTDAPQP…SPRNRKPRRE (78 aa). At serine 553 the chain carries Phosphoserine. A compositionally biased stretch (acidic residues) spans 555-568; that stretch reads AEEDGVTGSQDEED. Threonine 561 is modified (phosphothreonine). At serine 563 the chain carries Phosphoserine; by MAPK3. Serine 582 bears the Phosphoserine mark.

This sequence belongs to the calreticulin family. Interacts with MAPK3/ERK1. Interacts with KCNH2. Associates with ribosomes. The palmitoylated form interacts with the ribosome-translocon complex component SSR1, promoting efficient folding of glycoproteins. Interacts with SERPINA2P/SERPINA2 and with the S and Z variants of SERPINA1. Interacts with SGIP1; involved in negative regulation of endocytosis. Interacts with PPIB. Interacts with SMIM22. Interacts with TMX2. Interacts with TMEM35A/NACHO. Interacts with CHRNA7. Interacts with reticulophagy regulators RETREG2 and RETREG3. Interacts with DNM1L; may form part of a larger protein complex at the ER-mitochondrial interface during mitochondrial fission. Interacts with ADAM7. Phosphorylated at Ser-563 by MAPK3/ERK1. Phosphorylation by MAPK3/ERK1 increases its association with ribosomes. Post-translationally, palmitoylation by DHHC6 leads to the preferential localization to the perinuclear rough ER. It mediates the association of calnexin with the ribosome-translocon complex (RTC) which is required for efficient folding of glycosylated proteins. In terms of processing, ubiquitinated, leading to proteasomal degradation. Probably ubiquitinated by ZNRF4. In terms of tissue distribution, expressed in sperm (at protein level).

The protein resides in the endoplasmic reticulum membrane. Its subcellular location is the mitochondrion membrane. It localises to the melanosome membrane. Calcium-binding protein that interacts with newly synthesized monoglucosylated glycoproteins in the endoplasmic reticulum. It may act in assisting protein assembly and/or in the retention within the ER of unassembled protein subunits. It seems to play a major role in the quality control apparatus of the ER by the retention of incorrectly folded proteins. Associated with partial T-cell antigen receptor complexes that escape the ER of immature thymocytes, it may function as a signaling complex regulating thymocyte maturation. Additionally it may play a role in receptor-mediated endocytosis at the synapse. The protein is Calnexin (Canx) of Mus musculus (Mouse).